We begin with the raw amino-acid sequence, 479 residues long: Aspartyl/glutamyl-tRNA(Asn/Gln) amidotransferase subunit B (479 aa).

Belongs to the GatB/GatE family. GatB subfamily. As to quaternary structure, heterotrimer of A, B and C subunits.

The enzyme catalyses L-glutamyl-tRNA(Gln) + L-glutamine + ATP + H2O = L-glutaminyl-tRNA(Gln) + L-glutamate + ADP + phosphate + H(+). It catalyses the reaction L-aspartyl-tRNA(Asn) + L-glutamine + ATP + H2O = L-asparaginyl-tRNA(Asn) + L-glutamate + ADP + phosphate + 2 H(+). Allows the formation of correctly charged Asn-tRNA(Asn) or Gln-tRNA(Gln) through the transamidation of misacylated Asp-tRNA(Asn) or Glu-tRNA(Gln) in organisms which lack either or both of asparaginyl-tRNA or glutaminyl-tRNA synthetases. The reaction takes place in the presence of glutamine and ATP through an activated phospho-Asp-tRNA(Asn) or phospho-Glu-tRNA(Gln). The protein is Aspartyl/glutamyl-tRNA(Asn/Gln) amidotransferase subunit B of Mesoplasma florum (strain ATCC 33453 / NBRC 100688 / NCTC 11704 / L1) (Acholeplasma florum).